Here is a 304-residue protein sequence, read N- to C-terminus: Bifunctional protein FolD 3 (304 aa).

NADP(+) is bound by residues 172 to 174 (GRS), Ser-197, and Ile-238.

It belongs to the tetrahydrofolate dehydrogenase/cyclohydrolase family. Homodimer.

It catalyses the reaction (6R)-5,10-methylene-5,6,7,8-tetrahydrofolate + NADP(+) = (6R)-5,10-methenyltetrahydrofolate + NADPH. It carries out the reaction (6R)-5,10-methenyltetrahydrofolate + H2O = (6R)-10-formyltetrahydrofolate + H(+). Its pathway is one-carbon metabolism; tetrahydrofolate interconversion. Catalyzes the oxidation of 5,10-methylenetetrahydrofolate to 5,10-methenyltetrahydrofolate and then the hydrolysis of 5,10-methenyltetrahydrofolate to 10-formyltetrahydrofolate. This Rhizorhabdus wittichii (strain DSM 6014 / CCUG 31198 / JCM 15750 / NBRC 105917 / EY 4224 / RW1) (Sphingomonas wittichii) protein is Bifunctional protein FolD 3.